Consider the following 306-residue polypeptide: MPSQLLNTVLSYLTDILLSLSIVGSFLTIFTFMLYPKLRSYPIKLIIYLCMSIVFSLFFFEISFRSSNSLFCIPAAILVHYFFLANFFWTFSVSFNFFQMIVKRNRDSEFYERYYHLISWGIPFIIIIFCAAFKKYVDRGGFCYLEDQYSVYFGFFMPGVIIVCSNICIYVFVAKEIYKTLRHTPTQKRQTVKEFRVYFSIFVSIGSSWIFGFIYMFSDSNSIIGYIFLILFSISTSLQGFFIFISYCLNYKVFAHYSRSFTQYGVSFFKRWENLDGETTQSGPTGTTDSSSTMTSTTTTTNVYSA.

Over 1–15 (MPSQLLNTVLSYLTD) the chain is Extracellular. The helical transmembrane segment at 16-36 (ILLSLSIVGSFLTIFTFMLYP) threads the bilayer. At 37–41 (KLRSY) the chain is on the cytoplasmic side. Residues 42–62 (PIKLIIYLCMSIVFSLFFFEI) traverse the membrane as a helical segment. Residues 63 to 70 (SFRSSNSL) are Extracellular-facing. Residues 71 to 91 (FCIPAAILVHYFFLANFFWTF) form a helical membrane-spanning segment. Residues 92–113 (SVSFNFFQMIVKRNRDSEFYER) are Cytoplasmic-facing. The helical transmembrane segment at 114–134 (YYHLISWGIPFIIIIFCAAFK) threads the bilayer. Topologically, residues 135–152 (KYVDRGGFCYLEDQYSVY) are extracellular. A helical transmembrane segment spans residues 153 to 173 (FGFFMPGVIIVCSNICIYVFV). Residues 174-196 (AKEIYKTLRHTPTQKRQTVKEFR) lie on the Cytoplasmic side of the membrane. A helical membrane pass occupies residues 197 to 217 (VYFSIFVSIGSSWIFGFIYMF). Over 218 to 222 (SDSNS) the chain is Extracellular. Residues 223–243 (IIGYIFLILFSISTSLQGFFI) traverse the membrane as a helical segment. At 244–306 (FISYCLNYKV…TTTTTNVYSA (63 aa)) the chain is on the cytoplasmic side. Residues 279–306 (TTQSGPTGTTDSSSTMTSTTTTTNVYSA) are disordered.

This sequence belongs to the G-protein coupled receptor 2 family. LN-TM7 subfamily.

Its subcellular location is the membrane. The polypeptide is Latrophilin receptor-like protein A (lrlA) (Dictyostelium discoideum (Social amoeba)).